Consider the following 240-residue polypeptide: Aliphatic sulfonates import ATP-binding protein SsuB (240 aa).

In terms of domain architecture, ABC transporter spans isoleucine 6–glutamate 227. Glycine 38 to serine 45 lines the ATP pocket.

The protein belongs to the ABC transporter superfamily. Aliphatic sulfonates importer (TC 3.A.1.17.2) family. The complex is composed of two ATP-binding proteins (SsuB), two transmembrane proteins (SsuC) and a solute-binding protein (SsuA).

It localises to the cell inner membrane. It carries out the reaction ATP + H2O + aliphatic sulfonate-[sulfonate-binding protein]Side 1 = ADP + phosphate + aliphatic sulfonateSide 2 + [sulfonate-binding protein]Side 1.. In terms of biological role, part of the ABC transporter complex SsuABC involved in aliphatic sulfonates import. Responsible for energy coupling to the transport system. This is Aliphatic sulfonates import ATP-binding protein SsuB from Zymomonas mobilis subsp. mobilis (strain ATCC 31821 / ZM4 / CP4).